The primary structure comprises 262 residues: Small ribosomal subunit protein eS1z (262 aa).

Over residues 1–18 (MAVGKNKRISKGRKGGKK) the composition is skewed to basic residues. Positions 1–21 (MAVGKNKRISKGRKGGKKKAV) are disordered.

It belongs to the eukaryotic ribosomal protein eS1 family. In terms of assembly, component of the small ribosomal subunit. Mature ribosomes consist of a small (40S) and a large (60S) subunit. The 40S subunit contains about 33 different proteins and 1 molecule of RNA (18S). The 60S subunit contains about 49 different proteins and 3 molecules of RNA (25S, 5.8S and 5S).

It is found in the cytoplasm. The sequence is that of Small ribosomal subunit protein eS1z from Arabidopsis thaliana (Mouse-ear cress).